A 108-amino-acid polypeptide reads, in one-letter code: Replication restart protein PriB (108 aa).

An SSB domain is found at 8-108 (VDNRFSLIGK…LHAEQIEFIE (101 aa)).

The protein belongs to the PriB family. In terms of assembly, homodimer. Interacts with PriA and DnaT. Component of the replication restart primosome. Primosome assembly occurs via a 'hand-off' mechanism. PriA binds to replication forks, subsequently PriB then DnaT bind; DnaT then displaces ssDNA to generate the helicase loading substrate.

Its function is as follows. Involved in the restart of stalled replication forks, which reloads the replicative helicase on sites other than the origin of replication; the PriA-PriB pathway is the major replication restart pathway. During primosome assembly it facilitates complex formation between PriA and DnaT on DNA; stabilizes PriA on DNA. Stimulates the DNA unwinding activity of PriA helicase. This Histophilus somni (strain 2336) (Haemophilus somnus) protein is Replication restart protein PriB.